The primary structure comprises 106 residues: NADH dehydrogenase [ubiquinone] iron-sulfur protein 5 (106 aa).

Positions 30–74 (PSRCHAFEKEWIECAHGIGSIRAEKECKIEFEDFRECLLRQKTMK) constitute a CHCH domain. Short sequence motifs (cx9C motif) lie at residues 33–43 (CHAFEKEWIEC) and 56–66 (CKIEFEDFREC). 2 disulfides stabilise this stretch: Cys33–Cys66 and Cys43–Cys56. Residues 84–106 (EKLIKEGKYTPPPHHSGQEEPRS) are disordered.

It belongs to the complex I NDUFS5 subunit family. As to quaternary structure, mammalian complex I is composed of 45 different subunits. This is a component of the iron-sulfur (IP) fragment of the enzyme.

It localises to the mitochondrion inner membrane. Its subcellular location is the mitochondrion intermembrane space. Its function is as follows. Accessory subunit of the mitochondrial membrane respiratory chain NADH dehydrogenase (Complex I), that is believed not to be involved in catalysis. Complex I functions in the transfer of electrons from NADH to the respiratory chain. The immediate electron acceptor for the enzyme is believed to be ubiquinone. This is NADH dehydrogenase [ubiquinone] iron-sulfur protein 5 (NDUFS5) from Bos taurus (Bovine).